A 277-amino-acid chain; its full sequence is Large ribosomal subunit protein uL2c (277 aa).

Disordered regions lie at residues 24 to 57 and 226 to 266; these read IVQSKPEKQLTSGQHRKKGRNNRGVITSRHRGGG and NAAD…HKYS.

The protein belongs to the universal ribosomal protein uL2 family. Part of the 50S ribosomal subunit.

The protein resides in the plastid. It is found in the chloroplast. This is Large ribosomal subunit protein uL2c (rpl2) from Zygnema circumcarinatum (Green alga).